A 336-amino-acid chain; its full sequence is MKSAKKLLSVLCLGIFILTFTACDMVEKTPEAKAKSTIAKVNGEKIQRKDLDENPRFKQVVSQMKMQYGEEFEKSEQGKEVIKEQKSQILDELITEKILLQKGKELKVIPKDEELNKEADKKVNEIKAVYNNDEKKFEETLKSTGFTKETLKEYLKDQIVIEKVINEATKDVKVEDKDAQKYYNENQSMFTEKPNTMNVSHILVKTEDEAKKVKKRLDAKEDFAKVAKEVSQDTGSKDKGGLLGDINYNDANFDPTFMKAAMALKEGAISNPVHTQFGYHIIKINSKKEYPVKKFDAVKEDIKKQLKQEKQQEAYTKKIEEWKKASKIKTYEKNLL.

The first 22 residues, 1-22, serve as a signal peptide directing secretion; the sequence is MKSAKKLLSVLCLGIFILTFTA. The N-palmitoyl cysteine moiety is linked to residue C23. A lipid anchor (S-diacylglycerol cysteine) is attached at C23. One can recognise a PpiC domain in the interval 194-286; sequence PNTMNVSHIL…FGYHIIKINS (93 aa).

It belongs to the PrsA family.

The protein localises to the cell membrane. The enzyme catalyses [protein]-peptidylproline (omega=180) = [protein]-peptidylproline (omega=0). In terms of biological role, plays a major role in protein secretion by helping the post-translocational extracellular folding of several secreted proteins. This chain is Foldase protein PrsA, found in Clostridium botulinum (strain 657 / Type Ba4).